A 537-amino-acid polypeptide reads, in one-letter code: Periplasmic murein peptide-binding protein MppA (537 aa).

A signal peptide spans 1 to 22; sequence MKHSVSVTCCALLVSSISLSYA. K42, V54, L56, Q289, R424, S435, V437, D439, and T506 together coordinate L-alanyl-gamma-D-glutamyl-meso-2,6-diaminopimelate.

This sequence belongs to the bacterial solute-binding protein 5 family. In terms of assembly, the complex is composed of two ATP-binding proteins (OppD and OppF), two transmembrane proteins (OppB and OppC) and a solute-binding protein (MppA).

The protein resides in the periplasm. Functionally, part of the ABC transporter complex MppA-OppBCDF involved in the uptake of the cell wall murein tripeptide L-alanyl-gamma-D-glutamyl-meso-diaminopimelate. Is involved in the recycling of cell wall peptides. Binds the cell wall peptide L-Ala-D-Gly-gamma-meso-diaminopimelic acid. Can also transport ordinary alpha-linked tripeptides such as Pro-Phe-Lys, but with much lower efficiency than OppA. Cannot bind typical tripeptides such as Lys-Glu-Lys, Lys-Lys-Lys or Ala-Ala-Ala. This is Periplasmic murein peptide-binding protein MppA from Escherichia coli (strain K12).